The primary structure comprises 479 residues: mRNA export factor ICP27 homolog (479 aa).

Residues 1–15 (MVPSQRLSRTSSISS) show a composition bias toward low complexity. Disordered regions lie at residues 1–77 (MVPS…PSSV) and 91–210 (KKWD…NKPW). Over residues 35–44 (TDCDLDPMEG) the composition is skewed to acidic residues. A nuclear export signal and interaction with host NXF1 region spans residues 61 to 146 (DEDPTPAHAI…TDESYGKRRH (86 aa)). Residues 127–130 (KRRR) form a nuclear localization signal region. The span at 132–142 (EVHGCTDESYG) shows a compositional bias: basic and acidic residues. The nuclear localization signal stretch occupies residues 143–145 (KRR). The Zn(2+) site is built by Cys354, His445, Cys449, and Cys454. The CHC2-type zinc-finger motif lies at 354 to 454 (CFLPNTRDYN…HTRDCRSASC (101 aa)).

This sequence belongs to the HHV-1 ICP27 protein family. In terms of assembly, interacts with host XPO1 and with the XPO1 export pathway components small GTPase RAN and nucleoporin NUP214. Interacts with host SPEN, OTT1 and OTT3. Interacts with host SRSF1, SRSF3, SRSF7 and SRPK1. Interacts with host DHX9; this interaction may have an inhibitory effect on virion production. Interacts (via N-terminus) with host NXF1; this interaction plays a role in mRNA export. Phosphorylated by cellular protein kinase CK2.

It localises to the host nucleus. It is found in the host cytoplasm. In terms of biological role, promotes the nuclear export of a subset of early and late viral mRNAs by interacting with mRNAs and cellular export proteins. Additionally may prevent the establishment of cellular antiviral state, by acting as an alternative splicing factor for cellular RNAs such as STAT1, resulting in a STAT1 mRNA incapable of producing the STAT1alpha isoform. In Homo sapiens (Human), this protein is mRNA export factor ICP27 homolog.